We begin with the raw amino-acid sequence, 1441 residues long: Pleiotropic drug resistance protein TUR2 (1441 aa).

Positions 158–430 (LSALHLMPSG…FESMGFKCPE (273 aa)) constitute an ABC transporter 1 domain. 191 to 198 (GPPGAGKT) lines the ATP pocket. The 214-residue stretch at 508-721 (ELLKACIDRE…AQNAIAVNEF (214 aa)) folds into the ABC transmembrane type-2 1 domain. The next 6 membrane-spanning stretches (helical) occupy residues 526-546 (FVYI…MTVF), 559-579 (ATIF…NGFA), 614-634 (IPIS…VIGF), 646-666 (LLLV…AAVG), 671-691 (VADT…GFII), and 756-776 (IGVG…ILFL). The ABC transporter 2 domain occupies 843 to 1095 (ITFDNVKYSV…HLIKYFESID (253 aa)). 888–895 (GVSGRGKT) lines the ATP pocket. The region spanning 1168 to 1382 (MQCLACLWKQ…TLYGLVVSQF (215 aa)) is the ABC transmembrane type-2 2 domain. Transmembrane regions (helical) follow at residues 1187 to 1207 (YTAT…TIFW), 1215 to 1235 (TSLD…FIGI), 1275 to 1295 (VPHI…MIGF), 1302 to 1322 (FLWY…YGMM), 1332 to 1352 (IAAI…GFII), 1363 to 1383 (WYYW…SQFG), and 1413 to 1433 (VVGV…AFSI).

Belongs to the ABC transporter superfamily. ABCG family. PDR (TC 3.A.1.205) subfamily. As to expression, ubiquitous.

The protein localises to the cell membrane. Its function is as follows. May be a general defense protein. Seems involved in turion (dormant buds) formation. Confers resistance to the diterpenoid antifungal agent sclareol. The protein is Pleiotropic drug resistance protein TUR2 (TUR2) of Spirodela polyrhiza (Giant duckweed).